A 382-amino-acid chain; its full sequence is Apolipoprotein A-IV (382 aa).

A signal peptide spans 1-20 (MFLKAVVLTLSLVAVTGAQA). 13 tandem repeats follow at residues 33-54 (DYFSQLSNNAKEAVEHLQKSEL), 60-81 (ALFQDKIGQVNTYTDNLQKKLV), 82-103 (SFAMELHERLRKDSEKLKEEIR), 115-136 (PHADEVSRKIGDNMHELQQRLG), 137-158 (PYAEELRTQVNTHAEHLRNQLT), 159-180 (AHAQRMETTLRQNVGNLQASLT), 181-202 (PYADELKAKIDQNVEELKGHLT), 203-224 (PYADELKVKIDQNVEDLRRSLA), 225-246 (PYAQDVQEKLNHQLEGLAFQMK), 247-268 (KNAEELKAKISANADELRQKLV), 269-286 (PVAEVVRGKLRDNTEELQ), 287-308 (KSLAELSSHLDRQVEEFRRNMG), and 309-330 (PYGETFNKALLQQVEELRQKLG). The 13 X 22 AA approximate tandem repeats stretch occupies residues 33–330 (DYFSQLSNNA…QVEELRQKLG (298 aa)).

This sequence belongs to the apolipoprotein A1/A4/E family. As to quaternary structure, homodimer. Phosphorylation sites are present in the extracellular medium.

Its subcellular location is the secreted. In terms of biological role, may have a role in chylomicrons and VLDL secretion and catabolism. Required for efficient activation of lipoprotein lipase by ApoC-II; potent activator of LCAT. Apoa-IV is a major component of HDL and chylomicrons. The polypeptide is Apolipoprotein A-IV (APOA4) (Mirounga angustirostris (Northern elephant seal)).